The following is a 382-amino-acid chain: Flap endonuclease 1 (382 aa).

Residues M1 to R105 form an N-domain region. D34 lines the Mg(2+) pocket. DNA-binding residues include R47 and R71. 5 residues coordinate Mg(2+): D87, E156, E158, D177, and D179. The I-domain stretch occupies residues E120–H251. E156 contributes to the DNA binding site. The DNA site is built by G229 and D231. D231 is a Mg(2+) binding site. Positions I339–F347 are interaction with PCNA. Positions A358–R382 are disordered. The segment covering L370 to R382 has biased composition (basic residues).

It belongs to the XPG/RAD2 endonuclease family. FEN1 subfamily. As to quaternary structure, interacts with PCNA. Three molecules of RAD27 bind to one PCNA trimer with each molecule binding to one PCNA monomer. PCNA stimulates the nuclease activity without altering cleavage specificity. The cofactor is Mg(2+). Post-translationally, phosphorylated. Phosphorylation upon DNA damage induces relocalization to the nuclear plasma.

It is found in the nucleus. The protein resides in the nucleolus. It localises to the nucleoplasm. Its subcellular location is the mitochondrion. Its function is as follows. Structure-specific nuclease with 5'-flap endonuclease and 5'-3' exonuclease activities involved in DNA replication and repair. During DNA replication, cleaves the 5'-overhanging flap structure that is generated by displacement synthesis when DNA polymerase encounters the 5'-end of a downstream Okazaki fragment. It enters the flap from the 5'-end and then tracks to cleave the flap base, leaving a nick for ligation. Also involved in the long patch base excision repair (LP-BER) pathway, by cleaving within the apurinic/apyrimidinic (AP) site-terminated flap. Acts as a genome stabilization factor that prevents flaps from equilibrating into structures that lead to duplications and deletions. Also possesses 5'-3' exonuclease activity on nicked or gapped double-stranded DNA, and exhibits RNase H activity. Also involved in replication and repair of rDNA and in repairing mitochondrial DNA. The protein is Flap endonuclease 1 of Saccharomyces cerevisiae (strain RM11-1a) (Baker's yeast).